Reading from the N-terminus, the 297-residue chain is N-acetylmuramic acid 6-phosphate etherase (297 aa).

The SIS domain maps to 55-218 (ITKHFKQGGR…STGAMVGIGK (164 aa)). Glu-83 acts as the Proton donor in catalysis. Glu-114 is an active-site residue.

The protein belongs to the GCKR-like family. MurNAc-6-P etherase subfamily. Homodimer.

The enzyme catalyses N-acetyl-D-muramate 6-phosphate + H2O = N-acetyl-D-glucosamine 6-phosphate + (R)-lactate. It participates in amino-sugar metabolism; N-acetylmuramate degradation. Functionally, specifically catalyzes the cleavage of the D-lactyl ether substituent of MurNAc 6-phosphate, producing GlcNAc 6-phosphate and D-lactate. This is N-acetylmuramic acid 6-phosphate etherase from Oenococcus oeni (strain ATCC BAA-331 / PSU-1).